The following is a 299-amino-acid chain: Acetylglutamate kinase (299 aa).

Substrate is bound by residues 72 to 73, arginine 94, and asparagine 196; that span reads GG.

This sequence belongs to the acetylglutamate kinase family. ArgB subfamily.

The protein resides in the cytoplasm. It catalyses the reaction N-acetyl-L-glutamate + ATP = N-acetyl-L-glutamyl 5-phosphate + ADP. It participates in amino-acid biosynthesis; L-arginine biosynthesis; N(2)-acetyl-L-ornithine from L-glutamate: step 2/4. Its function is as follows. Catalyzes the ATP-dependent phosphorylation of N-acetyl-L-glutamate. The polypeptide is Acetylglutamate kinase (Burkholderia vietnamiensis (strain G4 / LMG 22486) (Burkholderia cepacia (strain R1808))).